Consider the following 307-residue polypeptide: Protoheme IX farnesyltransferase (307 aa).

A run of 9 helical transmembrane segments spans residues 33-53 (IGIV…AFYF), 62-82 (LHIV…SCSI), 111-131 (RVLW…LMTT), 132-152 (VTAA…YTLW), 159-179 (LNTV…WTAV), 185-205 (IVPL…FLAL), 229-249 (MTKR…FYLF), 251-271 (LGIP…LLGL), and 287-307 (FVYS…ATIW).

Belongs to the UbiA prenyltransferase family. Protoheme IX farnesyltransferase subfamily. Interacts with CtaA.

It is found in the cell membrane. It catalyses the reaction heme b + (2E,6E)-farnesyl diphosphate + H2O = Fe(II)-heme o + diphosphate. The protein operates within porphyrin-containing compound metabolism; heme O biosynthesis; heme O from protoheme: step 1/1. Its function is as follows. Converts heme B (protoheme IX) to heme O by substitution of the vinyl group on carbon 2 of heme B porphyrin ring with a hydroxyethyl farnesyl side group. This is Protoheme IX farnesyltransferase from Geobacillus thermodenitrificans (strain NG80-2).